We begin with the raw amino-acid sequence, 58 residues long: Preprotein translocase subunit SecG (58 aa).

Residues 1–32 (MAQKKKSSGSGLMSSAGLMTYYDADKKAIHVQ) lie on the Cytoplasmic side of the membrane. Residues 33–54 (PKTVFIFGAICGIVILAFSAGF) traverse the membrane as a helical segment. Topologically, residues 55–58 (GLWP) are extracellular.

It belongs to the SEC61-beta family. Component of the protein translocase complex. Heterotrimer consisting of alpha (SecY), beta (SecG) and gamma (SecE) subunits. Can form oligomers of the heterotrimer.

It localises to the cell membrane. In terms of biological role, involved in protein export. The function of the beta subunit is unknown, but it may be involved in stabilization of the trimeric complex. This chain is Preprotein translocase subunit SecG, found in Methanococcoides burtonii (strain DSM 6242 / NBRC 107633 / OCM 468 / ACE-M).